A 340-amino-acid chain; its full sequence is Anthranilate phosphoribosyltransferase (340 aa).

5-phospho-alpha-D-ribose 1-diphosphate is bound by residues glycine 81, 84–85, threonine 89, 91–94, 109–117, and alanine 121; these read GD, NIST, and KHGNRNLSS. Glycine 81 provides a ligand contact to anthranilate. Serine 93 provides a ligand contact to Mg(2+). Asparagine 112 serves as a coordination point for anthranilate. An anthranilate-binding site is contributed by arginine 167. The Mg(2+) site is built by aspartate 226 and glutamate 227.

It belongs to the anthranilate phosphoribosyltransferase family. Homodimer. It depends on Mg(2+) as a cofactor.

The enzyme catalyses N-(5-phospho-beta-D-ribosyl)anthranilate + diphosphate = 5-phospho-alpha-D-ribose 1-diphosphate + anthranilate. Its pathway is amino-acid biosynthesis; L-tryptophan biosynthesis; L-tryptophan from chorismate: step 2/5. Its function is as follows. Catalyzes the transfer of the phosphoribosyl group of 5-phosphorylribose-1-pyrophosphate (PRPP) to anthranilate to yield N-(5'-phosphoribosyl)-anthranilate (PRA). In Ruegeria sp. (strain TM1040) (Silicibacter sp.), this protein is Anthranilate phosphoribosyltransferase.